Here is a 162-residue protein sequence, read N- to C-terminus: Probable chemoreceptor glutamine deamidase CheD (162 aa).

The protein belongs to the CheD family.

It catalyses the reaction L-glutaminyl-[protein] + H2O = L-glutamyl-[protein] + NH4(+). Its function is as follows. Probably deamidates glutamine residues to glutamate on methyl-accepting chemotaxis receptors (MCPs), playing an important role in chemotaxis. In Pyrococcus horikoshii (strain ATCC 700860 / DSM 12428 / JCM 9974 / NBRC 100139 / OT-3), this protein is Probable chemoreceptor glutamine deamidase CheD.